The chain runs to 486 residues: ATP synthase subunit beta (486 aa).

164–171 (GGAGVGKT) contacts ATP.

This sequence belongs to the ATPase alpha/beta chains family. F-type ATPases have 2 components, CF(1) - the catalytic core - and CF(0) - the membrane proton channel. CF(1) has five subunits: alpha(3), beta(3), gamma(1), delta(1), epsilon(1). CF(0) has four main subunits: a(1), b(1), b'(1) and c(9-12).

It localises to the cellular thylakoid membrane. It catalyses the reaction ATP + H2O + 4 H(+)(in) = ADP + phosphate + 5 H(+)(out). Produces ATP from ADP in the presence of a proton gradient across the membrane. The catalytic sites are hosted primarily by the beta subunits. This chain is ATP synthase subunit beta, found in Prochlorococcus marinus subsp. pastoris (strain CCMP1986 / NIES-2087 / MED4).